A 417-amino-acid chain; its full sequence is COP9 signalosome complex subunit 7a (417 aa).

The PCI domain maps to 2–179 (EQTKALNALE…EMVQINSVAA (178 aa)). The segment at 240–417 (DEQKGAVPSS…KRGSKRKLTA (178 aa)) is disordered. The segment covering 263–290 (RGGGGGGDGAGAGGSFRGSGYSRGGGLS) has biased composition (gly residues). 3 stretches are compositionally biased toward low complexity: residues 291 to 311 (QGYRSSQRGSHQQHQNQSRQQ), 320 to 330 (SNQSGTNSLLT), and 343 to 352 (PSAVSPSAAA). The segment covering 367-379 (METGSGSGSGPLG) has biased composition (gly residues). Residues 385 to 405 (DMDDSEEDIDDDTMDLDDEGD) are compositionally biased toward acidic residues.

The protein belongs to the CSN7/EIF3M family. CSN7 subfamily. As to quaternary structure, component of the COP9 signalosome (CSN) complex.

The protein resides in the cytoplasm. It localises to the nucleus. In terms of biological role, component of the COP9 signalosome (CSN) complex that acts as an regulator of the ubiquitin (Ubl) conjugation pathway by mediating the deneddylation of the cullin subunit of SCF-type E3 ubiquitin-protein ligase complexes. The CSN complex is involved in the regulation of the circadian clock through its control of the stability of the SCF(FWD1) complex. The polypeptide is COP9 signalosome complex subunit 7a (csn-7a) (Neurospora crassa (strain ATCC 24698 / 74-OR23-1A / CBS 708.71 / DSM 1257 / FGSC 987)).